We begin with the raw amino-acid sequence, 102 residues long: NADH-quinone oxidoreductase subunit K (102 aa).

The next 3 helical transmembrane spans lie at 6 to 26 (LEHG…GLMV), 30 to 50 (ILFV…AFVV), and 62 to 82 (VMFI…LAIL).

This sequence belongs to the complex I subunit 4L family. As to quaternary structure, NDH-1 is composed of 13 different subunits. Subunits NuoA, H, J, K, L, M, N constitute the membrane sector of the complex.

The protein resides in the cell inner membrane. It catalyses the reaction a quinone + NADH + 5 H(+)(in) = a quinol + NAD(+) + 4 H(+)(out). Its function is as follows. NDH-1 shuttles electrons from NADH, via FMN and iron-sulfur (Fe-S) centers, to quinones in the respiratory chain. The immediate electron acceptor for the enzyme in this species is believed to be ubiquinone. Couples the redox reaction to proton translocation (for every two electrons transferred, four hydrogen ions are translocated across the cytoplasmic membrane), and thus conserves the redox energy in a proton gradient. The chain is NADH-quinone oxidoreductase subunit K from Pseudomonas putida (strain ATCC 700007 / DSM 6899 / JCM 31910 / BCRC 17059 / LMG 24140 / F1).